A 181-amino-acid chain; its full sequence is Inner membrane-spanning protein YciB (181 aa).

Helical transmembrane passes span I22–V42, M50–D70, I80–I100, I118–F138, and F148–V168.

This sequence belongs to the YciB family.

It is found in the cell inner membrane. Its function is as follows. Plays a role in cell envelope biogenesis, maintenance of cell envelope integrity and membrane homeostasis. The chain is Inner membrane-spanning protein YciB from Aliivibrio salmonicida (strain LFI1238) (Vibrio salmonicida (strain LFI1238)).